A 166-amino-acid chain; its full sequence is Myosin regulatory light chain 2, ventricular/cardiac muscle isoform (166 aa).

Residue Ser-2 is modified to N,N,N-trimethylserine. A Deamidated asparagine modification is found at Asn-14. Residue Ser-19 is modified to Phosphoserine. 3 EF-hand domains span residues 24 to 59 (TQIQEFKEAFTIMDQNRDGFIDKNDLRDTFAALGRV), 94 to 129 (DPEETILNAFKVFDPEGKGVLKADYIKEMLTTQAER), and 130 to 165 (FSKEEIDQMFAAFPPDVTGNLDYKNLVHIITHGEEK). 4 residues coordinate Ca(2+): Asp-37, Asn-39, Asp-41, and Asp-48. Thr-52 bears the Phosphothreonine mark.

As to quaternary structure, myosin is a hexamer of 2 heavy chains and 4 light chains. Interacts with MYOC. Post-translationally, N-terminus is methylated by METTL11A/NTM1. In terms of processing, phosphorylated by MYLK3 and MYLK2; promotes cardiac muscle contraction and function. Dephosphorylated by PPP1CB complexed to PPP1R12B. The phosphorylated form in adult is expressed as gradients across the heart from endocardium (low phosphorylation) to epicardium (high phosphorylation); regulates cardiac torsion and workload distribution.

The protein resides in the cytoplasm. It localises to the myofibril. Its subcellular location is the sarcomere. It is found in the a band. Contractile protein that plays a role in heart development and function. Following phosphorylation, plays a role in cross-bridge cycling kinetics and cardiac muscle contraction by increasing myosin lever arm stiffness and promoting myosin head diffusion; as a consequence of the increase in maximum contraction force and calcium sensitivity of contraction force. These events altogether slow down myosin kinetics and prolong duty cycle resulting in accumulated myosins being cooperatively recruited to actin binding sites to sustain thin filament activation as a means to fine-tune myofilament calcium sensitivity to force. During cardiogenesis plays an early role in cardiac contractility by promoting cardiac myofibril assembly. In Bos taurus (Bovine), this protein is Myosin regulatory light chain 2, ventricular/cardiac muscle isoform.